A 615-amino-acid polypeptide reads, in one-letter code: MATKNSKQNMSVLLTKLGDRDTFTMAARELDLMARQIDPSSSSGNLQSFISVILSVDTGDKPAVRKHCIHLLAVLSVSLPLNSLSPFLSKILTRITRRLRDPDSSIRSTCVAAVSAISSRTTKPPFYSAFMKPLADTLFTEQEVNAQIGAALCLAAAIDSASDPDPVRLGQTLLPRLEKLVKCNAFKAKSAGVVVIGSVIGAGGLSGTSVSSGGLKGLVDCLLSFLVSEDWAARKAAAEALGRLATMERNELGEFKAKCLKIFESRKYDKVKAVREVMNQMMEAWKQVPDLSEEVSPPRSNASSKGDASDGRYPSGSRVGSTPAKSRTHLVNRSTPPGSSLATTARKQANRKSIDQKKTSLTASLTKPNVRRRLEWKAGGASIPTGVSLEDEQHCDHDENAKETSHSSHNTVQKLGGVSSSLNGNIPPSGATMVTGHHVLSENPNSNNCKGLEDISLIRNQLVQIEQQQANLMDLLQRFVGSSQHGMRGLETRVHGLELALDEISYDLAVSNGRMSNGSSRNNCCLLPSGSFIKSKFWKKHDSKYSASRMSTYRNRNAETTEIQNSRHRFNGSPGFIVNPLAEIRPDNDLQVCLTIEGRRETKPSKASETLKTTV.

5 HEAT repeats span residues 44–81 (GNLQ…SLPL), 86–123 (PFLS…RTTK), 125–163 (PFYS…SASD), 168–205 (RLGQ…AGGL), and 213–250 (GGLK…MERN). Residues 288-446 (VPDLSEEVSP…HHVLSENPNS (159 aa)) form a disordered region. A compositionally biased stretch (polar residues) spans 318–347 (RVGSTPAKSRTHLVNRSTPPGSSLATTARK). Residues 391 to 406 (DEQHCDHDENAKETSH) are compositionally biased toward basic and acidic residues. Positions 407 to 426 (SSHNTVQKLGGVSSSLNGNI) are enriched in polar residues. Residue Ser-456 is modified to Phosphoserine.

This Arabidopsis thaliana (Mouse-ear cress) protein is TORTIFOLIA1-like protein 3.